Reading from the N-terminus, the 1440-residue chain is Gag-Pol polyprotein (1440 aa).

G2 carries the N-myristoyl glycine; by host lipid modification. Positions 7-31 (VLSGGKLDAWEKIRLRPGGKKKYRL) are interaction with Gp41. Positions 8–43 (LSGGKLDAWEKIRLRPGGKKKYRLKHLVWASRELER) are interaction with host CALM1. The segment at 12–19 (KLDAWEKI) is interaction with host AP3D1. An interaction with membrane phosphatidylinositol 4,5-bisphosphate and RNA region spans residues 14 to 33 (DAWEKIRLRPGGKKKYRLKH). Positions 16–22 (WEKIRLR) match the Nuclear export signal motif. The short motif at 26–32 (KKKYRLK) is the Nuclear localization signal element. Positions 73–77 (EEIKS) are interaction with membrane phosphatidylinositol 4,5-bisphosphate. Y138 is subject to Phosphotyrosine; by host. The interval 195-233 (NIVGGHQAAMQMLKDTINEEAADWDRVHPVHAGPIPPGQ) is interaction with human PPIA/CYPA and NUP153. The interval 283 to 369 (YSPVSILDIR…GGPSHKARVL (87 aa)) is dimerization/Multimerization of capsid protein p24. 2 CCHC-type zinc fingers span residues 396–413 (IKCF…NCRA) and 417–434 (KGCW…DCTE). Positions 494–498 (PQITL) are dimerization of protease. Residues 513-582 (KEALLDTGAD…TPVNIIGRNM (70 aa)) form the Peptidase A2 domain. Residue D518 is the For protease activity; shared with dimeric partner of the active site. Dimerization of protease stretches follow at residues 542–548 (GIGGFIK) and 581–593 (NMLT…LNFP). One can recognise a Reverse transcriptase domain in the interval 636-826 (EGKILKIGPE…PPFLWMGYEL (191 aa)). The Mg(2+) site is built by D702, D777, and D778. Residues 819-827 (FLWMGYELH) are RT 'primer grip'. The Tryptophan repeat motif signature appears at 990–1006 (WEAWWTEYWQATWIPEW). An RNase H type-1 domain is found at 1026-1149 (IVGAETFYVD…VDKLVSSGIR (124 aa)). Mg(2+)-binding residues include D1035, E1070, D1090, and D1141. The Integrase-type zinc-finger motif lies at 1155-1196 (DGIDKAQEEHEKYHSNWRAMASDFNLPPIVAKEIVASCDKCQ). H1164, H1168, C1192, and C1195 together coordinate Zn(2+). The Integrase catalytic domain maps to 1206–1356 (VDCSPGIWQL…SAGERIIDMI (151 aa)). D1216, D1268, and E1304 together coordinate Mg(2+). Residues 1375-1422 (FRVYYRDNRDPIWKGPAKLLWKGEGAVVIQDNSDIKVVPRRKAKIIRD) constitute a DNA-binding region (integrase-type).

Homotrimer; further assembles as hexamers of trimers. Interacts with gp41 (via C-terminus). Interacts with host CALM1; this interaction induces a conformational change in the Matrix protein, triggering exposure of the myristate group. Interacts with host AP3D1; this interaction allows the polyprotein trafficking to multivesicular bodies during virus assembly. Part of the pre-integration complex (PIC) which is composed of viral genome, matrix protein, Vpr and integrase. In terms of assembly, homodimer; the homodimer further multimerizes as homohexamers or homopentamers. Interacts with human PPIA/CYPA; This interaction stabilizes the capsid. Interacts with human NUP153. Interacts with host PDZD8; this interaction stabilizes the capsid. Interacts with monkey TRIM5; this interaction destabilizes the capsid. As to quaternary structure, homodimer, whose active site consists of two apposed aspartic acid residues. Heterodimer of p66 RT and p51 RT (RT p66/p51). Heterodimerization of RT is essential for DNA polymerase activity. The overall folding of the subdomains is similar in p66 RT and p51 RT but the spatial arrangements of the subdomains are dramatically different. In terms of assembly, homotetramer; may further associate as a homohexadecamer. Part of the pre-integration complex (PIC) which is composed of viral genome, matrix protein, Vpr and integrase. Interacts with human SMARCB1/INI1 and human PSIP1/LEDGF isoform 1. Interacts with human KPNA3; this interaction might play a role in nuclear import of the pre-integration complex. Interacts with human NUP153; this interaction might play a role in nuclear import of the pre-integration complex. The cofactor is Mg(2+). Post-translationally, specific enzymatic cleavages by the viral protease yield mature proteins. The protease is released by autocatalytic cleavage. The polyprotein is cleaved during and after budding, this process is termed maturation. Proteolytic cleavage of p66 RT removes the RNase H domain to yield the p51 RT subunit. Nucleocapsid protein p7 might be further cleaved after virus entry. Tyrosine phosphorylated presumably in the virion by a host kinase. Phosphorylation is apparently not a major regulator of membrane association. In terms of processing, phosphorylated possibly by host MAPK1; this phosphorylation is necessary for Pin1-mediated virion uncoating. Post-translationally, methylated by host PRMT6, impairing its function by reducing RNA annealing and the initiation of reverse transcription.

It is found in the host cell membrane. The protein localises to the host endosome. The protein resides in the host multivesicular body. Its subcellular location is the virion membrane. It localises to the host nucleus. It is found in the host cytoplasm. The protein localises to the virion. It carries out the reaction Specific for a P1 residue that is hydrophobic, and P1' variable, but often Pro.. The catalysed reaction is Endohydrolysis of RNA in RNA/DNA hybrids. Three different cleavage modes: 1. sequence-specific internal cleavage of RNA. Human immunodeficiency virus type 1 and Moloney murine leukemia virus enzymes prefer to cleave the RNA strand one nucleotide away from the RNA-DNA junction. 2. RNA 5'-end directed cleavage 13-19 nucleotides from the RNA end. 3. DNA 3'-end directed cleavage 15-20 nucleotides away from the primer terminus.. It catalyses the reaction 3'-end directed exonucleolytic cleavage of viral RNA-DNA hybrid.. The enzyme catalyses DNA(n) + a 2'-deoxyribonucleoside 5'-triphosphate = DNA(n+1) + diphosphate. With respect to regulation, protease: The viral protease is inhibited by many synthetic protease inhibitors (PIs), such as amprenavir, atazanavir, indinavir, loprinavir, nelfinavir, ritonavir and saquinavir. Use of protease inhibitors in tritherapy regimens permit more ambitious therapeutic strategies. Reverse transcriptase/ribonuclease H: RT can be inhibited either by nucleoside RT inhibitors (NRTIs) or by non nucleoside RT inhibitors (NNRTIs). NRTIs act as chain terminators, whereas NNRTIs inhibit DNA polymerization by binding a small hydrophobic pocket near the RT active site and inducing an allosteric change in this region. Classical NRTIs are abacavir, adefovir (PMEA), didanosine (ddI), lamivudine (3TC), stavudine (d4T), tenofovir (PMPA), zalcitabine (ddC), and zidovudine (AZT). Classical NNRTIs are atevirdine (BHAP U-87201E), delavirdine, efavirenz (DMP-266), emivirine (I-EBU), and nevirapine (BI-RG-587). The tritherapies used as a basic effective treatment of AIDS associate two NRTIs and one NNRTI. In terms of biological role, mediates, with Gag polyprotein, the essential events in virion assembly, including binding the plasma membrane, making the protein-protein interactions necessary to create spherical particles, recruiting the viral Env proteins, and packaging the genomic RNA via direct interactions with the RNA packaging sequence (Psi). Gag-Pol polyprotein may regulate its own translation, by the binding genomic RNA in the 5'-UTR. At low concentration, the polyprotein would promote translation, whereas at high concentration, the polyprotein would encapsidate genomic RNA and then shut off translation. Targets the polyprotein to the plasma membrane via a multipartite membrane-binding signal, that includes its myristoylated N-terminus. Matrix protein is part of the pre-integration complex. Implicated in the release from host cell mediated by Vpu. Binds to RNA. Its function is as follows. Forms the conical core that encapsulates the genomic RNA-nucleocapsid complex in the virion. Most core are conical, with only 7% tubular. The core is constituted by capsid protein hexamer subunits. The core is disassembled soon after virion entry. Host restriction factors such as TRIM5-alpha or TRIMCyp bind retroviral capsids and cause premature capsid disassembly, leading to blocks in reverse transcription. Capsid restriction by TRIM5 is one of the factors which restricts HIV-1 to the human species. Host PIN1 apparently facilitates the virion uncoating. On the other hand, interactions with PDZD8 or CYPA stabilize the capsid. Functionally, encapsulates and protects viral dimeric unspliced genomic RNA (gRNA). Binds these RNAs through its zinc fingers. Acts as a nucleic acid chaperone which is involved in rearangement of nucleic acid secondary structure during gRNA retrotranscription. Also facilitates template switch leading to recombination. As part of the polyprotein, participates in gRNA dimerization, packaging, tRNA incorporation and virion assembly. In terms of biological role, aspartyl protease that mediates proteolytic cleavages of Gag and Gag-Pol polyproteins during or shortly after the release of the virion from the plasma membrane. Cleavages take place as an ordered, step-wise cascade to yield mature proteins. This process is called maturation. Displays maximal activity during the budding process just prior to particle release from the cell. Also cleaves Nef and Vif, probably concomitantly with viral structural proteins on maturation of virus particles. Hydrolyzes host EIF4GI and PABP1 in order to shut off the capped cellular mRNA translation. The resulting inhibition of cellular protein synthesis serves to ensure maximal viral gene expression and to evade host immune response. Also mediates cleavage of host YTHDF3. Mediates cleavage of host CARD8, thereby activating the CARD8 inflammasome, leading to the clearance of latent HIV-1 in patient CD4(+) T-cells after viral reactivation; in contrast, HIV-1 can evade CARD8-sensing when its protease remains inactive in infected cells prior to viral budding. Multifunctional enzyme that converts the viral RNA genome into dsDNA in the cytoplasm, shortly after virus entry into the cell. This enzyme displays a DNA polymerase activity that can copy either DNA or RNA templates, and a ribonuclease H (RNase H) activity that cleaves the RNA strand of RNA-DNA heteroduplexes in a partially processive 3' to 5' endonucleasic mode. Conversion of viral genomic RNA into dsDNA requires many steps. A tRNA(3)-Lys binds to the primer-binding site (PBS) situated at the 5'-end of the viral RNA. RT uses the 3' end of the tRNA primer to perform a short round of RNA-dependent minus-strand DNA synthesis. The reading proceeds through the U5 region and ends after the repeated (R) region which is present at both ends of viral RNA. The portion of the RNA-DNA heteroduplex is digested by the RNase H, resulting in a ssDNA product attached to the tRNA primer. This ssDNA/tRNA hybridizes with the identical R region situated at the 3' end of viral RNA. This template exchange, known as minus-strand DNA strong stop transfer, can be either intra- or intermolecular. RT uses the 3' end of this newly synthesized short ssDNA to perform the RNA-dependent minus-strand DNA synthesis of the whole template. RNase H digests the RNA template except for two polypurine tracts (PPTs) situated at the 5'-end and near the center of the genome. It is not clear if both polymerase and RNase H activities are simultaneous. RNase H probably can proceed both in a polymerase-dependent (RNA cut into small fragments by the same RT performing DNA synthesis) and a polymerase-independent mode (cleavage of remaining RNA fragments by free RTs). Secondly, RT performs DNA-directed plus-strand DNA synthesis using the PPTs that have not been removed by RNase H as primers. PPTs and tRNA primers are then removed by RNase H. The 3' and 5' ssDNA PBS regions hybridize to form a circular dsDNA intermediate. Strand displacement synthesis by RT to the PBS and PPT ends produces a blunt ended, linear dsDNA copy of the viral genome that includes long terminal repeats (LTRs) at both ends. Its function is as follows. Catalyzes viral DNA integration into the host chromosome, by performing a series of DNA cutting and joining reactions. This enzyme activity takes place after virion entry into a cell and reverse transcription of the RNA genome in dsDNA. The first step in the integration process is 3' processing. This step requires a complex comprising the viral genome, matrix protein, Vpr and integrase. This complex is called the pre-integration complex (PIC). The integrase protein removes 2 nucleotides from each 3' end of the viral DNA, leaving recessed CA OH's at the 3' ends. In the second step, the PIC enters cell nucleus. This process is mediated through integrase and Vpr proteins, and allows the virus to infect a non dividing cell. This ability to enter the nucleus is specific of lentiviruses, other retroviruses cannot and rely on cell division to access cell chromosomes. In the third step, termed strand transfer, the integrase protein joins the previously processed 3' ends to the 5' ends of strands of target cellular DNA at the site of integration. The 5'-ends are produced by integrase-catalyzed staggered cuts, 5 bp apart. A Y-shaped, gapped, recombination intermediate results, with the 5'-ends of the viral DNA strands and the 3' ends of target DNA strands remaining unjoined, flanking a gap of 5 bp. The last step is viral DNA integration into host chromosome. This involves host DNA repair synthesis in which the 5 bp gaps between the unjoined strands are filled in and then ligated. Since this process occurs at both cuts flanking the HIV genome, a 5 bp duplication of host DNA is produced at the ends of HIV-1 integration. Alternatively, Integrase may catalyze the excision of viral DNA just after strand transfer, this is termed disintegration. This chain is Gag-Pol polyprotein (gag-pol), found in Human immunodeficiency virus type 1 group M subtype A (isolate MAL) (HIV-1).